A 268-amino-acid chain; its full sequence is Deoxyuridine 5'-triphosphate nucleotidohydrolase (268 aa).

Substrate contacts are provided by residues 172 to 174 (RSS) and 263 to 264 (FG).

Belongs to the dUTPase family. It depends on Mg(2+) as a cofactor.

It catalyses the reaction dUTP + H2O = dUMP + diphosphate + H(+). Involved in nucleotide metabolism: produces dUMP, the immediate precursor of thymidine nucleotides and decreases the intracellular concentration of dUTP to avoid uracil incorporation into viral DNA. This chain is Deoxyuridine 5'-triphosphate nucleotidohydrolase, found in Suid herpesvirus 1 (strain Kaplan) (SuHV-1).